The following is a 316-amino-acid chain: Methionyl-tRNA formyltransferase (316 aa).

113 to 116 (SLLP) lines the (6S)-5,6,7,8-tetrahydrofolate pocket.

The protein belongs to the Fmt family.

The catalysed reaction is L-methionyl-tRNA(fMet) + (6R)-10-formyltetrahydrofolate = N-formyl-L-methionyl-tRNA(fMet) + (6S)-5,6,7,8-tetrahydrofolate + H(+). Functionally, attaches a formyl group to the free amino group of methionyl-tRNA(fMet). The formyl group appears to play a dual role in the initiator identity of N-formylmethionyl-tRNA by promoting its recognition by IF2 and preventing the misappropriation of this tRNA by the elongation apparatus. This Proteus mirabilis (strain HI4320) protein is Methionyl-tRNA formyltransferase.